The sequence spans 329 residues: Ribosomal RNA small subunit methyltransferase H (329 aa).

Residues 44–46, Asp-62, Asp-110, and Gln-117 contribute to the S-adenosyl-L-methionine site; that span reads GGY. The interval 297-329 is disordered; the sequence is APAELAANPRARSARLRSAERTSAPARRLGDAA.

It belongs to the methyltransferase superfamily. RsmH family.

It localises to the cytoplasm. The catalysed reaction is cytidine(1402) in 16S rRNA + S-adenosyl-L-methionine = N(4)-methylcytidine(1402) in 16S rRNA + S-adenosyl-L-homocysteine + H(+). In terms of biological role, specifically methylates the N4 position of cytidine in position 1402 (C1402) of 16S rRNA. The polypeptide is Ribosomal RNA small subunit methyltransferase H (Rhodospirillum centenum (strain ATCC 51521 / SW)).